A 396-amino-acid chain; its full sequence is Probable sugar efflux transporter (396 aa).

A run of 12 helical transmembrane segments spans residues 15–35 (VVTLAIAAFIFNTTEFVPVGL), 50–70 (VGIMLTIYAWVVAVMSLPFML), 81–101 (LICLFVLFIASHVLSFLAWNF), 103–123 (VLVISRIGIAFAHAIFWSITA), 136–156 (AQALSLIATGTALAMVLGLPI), 169–189 (TFFAIGMGALITLLCLIKLLP), 202–222 (LPLLFRCPALMSLYVLTVVVV), 246–266 (FATVLLLLLGGAGIIGSLVFG), 275–295 (SLVSIAIALLVVCLLLLLPAA), 301–321 (LAILSIFWGIAIMVIGLGMQV), 333–353 (VAMALFSGIFNIGIGAGALVG), and 364–384 (AIGYIGAIPACAALVWAVLIF).

The protein belongs to the major facilitator superfamily. SotB (TC 2.A.1.2) family.

The protein localises to the cell inner membrane. Involved in the efflux of sugars. The physiological role may be the reduction of the intracellular concentration of toxic sugars or sugar metabolites. The polypeptide is Probable sugar efflux transporter (Salmonella paratyphi A (strain ATCC 9150 / SARB42)).